We begin with the raw amino-acid sequence, 59 residues long: UPF0434 protein Shew185_1670 (59 aa).

This sequence belongs to the UPF0434 family.

The polypeptide is UPF0434 protein Shew185_1670 (Shewanella baltica (strain OS185)).